The chain runs to 1243 residues: Zinc finger protein ZFAT (1243 aa).

A C2H2-type 1 zinc finger spans residues 12 to 35; sequence FMCKCCNLFSPNQSELLSHVSEKH. Disordered regions lie at residues 51–116 and 147–189; these read PLST…PSSL and GEAG…GKEA. Positions 70–81 are enriched in basic residues; that stretch reads MKRKRGRPKGST. The C2H2-type 2; degenerate zinc finger occupies 116 to 141; it reads LECSKCCRKFSNTRQLRKHICIIVLN. Residues 156 to 189 show a composition bias toward basic and acidic residues; sequence ELEKKCKEDDREKASKRPRSQKTEKVQKISGKEA. C2H2-type zinc fingers lie at residues 271–293, 299–321, 326–349, 354–377, 404–426, 432–454, and 458–481; these read FTCE…LRIH, YKCP…LRKH, FACD…ERVH, QHCR…RDAH, YDCH…MLVH, FACE…VRKH, and YVCA…KEVH. C273, C276, H289, H293, C301, C304, H317, H321, C328, C331, H344, H349, C356, C359, H372, H377, C406, C409, H422, and H426 together coordinate Zn(2+). 4 residues coordinate Zn(2+): C460, C463, H476, and H481. Disordered regions lie at residues 534–570, 603–625, and 638–705; these read EACP…AEST, TSSA…SSVQ, and AQSA…CKAA. The span at 610–620 shows a compositional bias: basic and acidic residues; it reads AAPEKPPDMQH. The span at 638–650 shows a compositional bias: polar residues; sequence AQSAGSDQESHGA. 10 consecutive C2H2-type zinc fingers follow at residues 742–764, 770–793, 798–822, 830–853, 880–903, 909–931, 937–959, 966–988, 994–1017, and 1041–1064; these read LECE…VRTH, YYCS…IQKH, LKCP…LKVH, YSCP…KTNH, MKCP…IWAH, FKCS…MNRH, HLCD…KLLH, FKCT…MEQH, FRCA…NRKH, and LKCP…KNKH. Zn(2+)-binding residues include C772, C775, H788, H793, C800, C805, H818, H822, C832, C835, H848, H853, C882, C885, H899, H903, C911, C914, H927, H931, C939, C942, H955, and L958.

As to expression, isoform 1 is strongly expressed in placenta, spleen, kidney, testis and peripheral blood leukocytes. Expressed in CD4+ and CD8+ T-cells, CD19+ B-cells and CB14+ monocytes. Isoform 3 is strongly expressed in placenta, ovary, tonsil, CD19+ B-cells and CD14+ monocytes.

It localises to the nucleus. The protein localises to the cytoplasm. It is found in the cytosol. Its function is as follows. May be involved in transcriptional regulation. Overexpression causes down-regulation of a number of genes involved in the immune response. Some genes are also up-regulated. The sequence is that of Zinc finger protein ZFAT (ZFAT) from Homo sapiens (Human).